Here is a 950-residue protein sequence, read N- to C-terminus: Protocadherin alpha-1 (950 aa).

A signal peptide spans 1-29 (MVFSRRGGLGARDLLLWLLLLAAWEVGSG). Cadherin domains lie at 30–133 (QLHY…PPVF), 157–242 (AADA…APLF), 243–350 (DQAV…APEL), 351–455 (AVTS…APAF), 456–565 (AQPE…APAL), and 588–678 (GHVV…APKA). The Extracellular portion of the chain corresponds to 30 to 697 (QLHYSIPEEA…GPEAALVDVN (668 aa)). N-linked (GlcNAc...) asparagine glycosylation is found at Asn257 and Asn265. Asn548 is a glycosylation site (N-linked (GlcNAc...) asparagine). A helical membrane pass occupies residues 698–718 (VYLIIAICAVSSLLVLTLLLY). The Cytoplasmic segment spans residues 719–950 (TALRCSVPPT…GNSTTDNSDQ (232 aa)). PXXP repeat units lie at residues 734-737 (PGKP), 799-802 (PRQP), 832-835 (PGGP), 873-876 (PGNP), and 891-894 (PGSP). Positions 734–894 (PGKPTLVCSS…PDKFIIPGSP (161 aa)) are 5 X 4 AA repeats of P-X-X-P. 3 disordered regions span residues 752–808 (QQRR…DWRY), 828–856 (LRAG…EVSP), and 871–890 (YGPG…KFII). The segment at 900-950 (RQEPTNSQIDKSDFITFGKKEETKKKKKKKKGNKTQEKKEKGNSTTDNSDQ) is disordered. Residues 909-923 (DKSDFITFGKKEETK) show a composition bias toward basic and acidic residues.

It is found in the cell membrane. The protein resides in the secreted. Potential calcium-dependent cell-adhesion protein. May be involved in the establishment and maintenance of specific neuronal connections in the brain. The polypeptide is Protocadherin alpha-1 (PCDHA1) (Homo sapiens (Human)).